A 473-amino-acid polypeptide reads, in one-letter code: Levansucrase (473 aa).

A signal peptide spans 1 to 29 (MNIKKFAKQATVLTFTTALLAGGATQAFA). Sucrose contacts are provided by tryptophan 85, aspartate 86, and serine 164. The active-site Nucleophile is the aspartate 86. Aspartate 241 provides a ligand contact to Ca(2+). 2 residues coordinate sucrose: arginine 246 and aspartate 247. Glutamine 272, leucine 308, asparagine 310, and aspartate 339 together coordinate Ca(2+). Sucrose is bound at residue glutamate 340. Glutamate 342 functions as the Proton donor/acceptor in the catalytic mechanism. Arginine 360 is a sucrose binding site.

Belongs to the glycosyl hydrolase 68 family. As to quaternary structure, monomer.

Its subcellular location is the secreted. It carries out the reaction [6)-beta-D-fructofuranosyl-(2-&gt;](n) alpha-D-glucopyranoside + sucrose = [6)-beta-D-fructofuranosyl-(2-&gt;](n+1) alpha-D-glucopyranoside + D-glucose. With respect to regulation, ca(2+) may play an important structural role and promote stability of levansucrase. The enzyme concentration is a factor defining the molecular weight (MW) levan distribution. A bimodal distribution is reported at the usual enzyme concentrations. At low concentrations, the enzyme synthesizes high MW levan, and at high concentrations, it synthesizes low MW levan. In terms of biological role, catalyzes the synthesis of levan, a fructose polymer, by transferring the fructosyl moiety from sucrose to a growing acceptor molecule. Also displays sucrose hydrolase activity. At low sucrose concentrations, functions as an hydrolase with water as acceptor, whereas at higher substrate concentrations it adds fructosyl units to a growing levan chain. The polypeptide is Levansucrase (Bacillus subtilis (strain 168)).